Consider the following 513-residue polypeptide: Activin receptor type-2A (513 aa).

The first 19 residues, 1-19 (MGAAAKLAFAVFLISCSSG), serve as a signal peptide directing secretion. Residues 20-135 (AILGRSETQE…TSNPVTPKPP (116 aa)) are Extracellular-facing. Cystine bridges form between C30/C60, C50/C78, C85/C104, C91/C103, and C105/C110. Residues N43 and N66 are each glycosylated (N-linked (GlcNAc...) asparagine). A helical membrane pass occupies residues 136–161 (YYNILLYSLVPLMLIAGIVICAFWVY). Residues 162 to 513 (RHHKMAYPPV…VDFPPKESSL (352 aa)) lie on the Cytoplasmic side of the membrane. The region spanning 192-485 (LQLLEVKARG…GERITQMQRL (294 aa)) is the Protein kinase domain. ATP contacts are provided by residues 198–206 (KARGRFGCV) and K219. D322 acts as the Proton acceptor in catalysis.

It belongs to the protein kinase superfamily. TKL Ser/Thr protein kinase family. TGFB receptor subfamily. In terms of assembly, part of a complex consisting of MAGI2/ARIP1, ACVR2A, ACVR1B and SMAD3. Interacts with MAGI2/ARIP1. Interacts with type I receptor ACVR1. Interacts with BMP7. Interacts with TSC22D1/TSC-22. Interacts with activin A/INHBA. Mg(2+) serves as cofactor. It depends on Mn(2+) as a cofactor.

It is found in the cell membrane. The enzyme catalyses L-threonyl-[receptor-protein] + ATP = O-phospho-L-threonyl-[receptor-protein] + ADP + H(+). It carries out the reaction L-seryl-[receptor-protein] + ATP = O-phospho-L-seryl-[receptor-protein] + ADP + H(+). On ligand binding, forms a receptor complex consisting of two type II and two type I transmembrane serine/threonine kinases. Type II receptors phosphorylate and activate type I receptors which autophosphorylate, then bind and activate SMAD transcriptional regulators. Receptor for activin A, activin B and inhibin A. Mediates induction of adipogenesis by GDF6. The polypeptide is Activin receptor type-2A (Homo sapiens (Human)).